Reading from the N-terminus, the 76-residue chain is Defensin-like protein 5 (76 aa).

The signal sequence occupies residues 1-29 (MKVSPRLNSALLLLFMILATVMGLVTVEA). Cystine bridges form between C32–C76, C43–C63, C49–C70, and C53–C72.

Belongs to the DEFL family.

It localises to the secreted. Confers broad-spectrum resistance to pathogens. The polypeptide is Defensin-like protein 5 (PDF2.4) (Arabidopsis thaliana (Mouse-ear cress)).